The following is a 63-amino-acid chain: Small ribosomal subunit protein eS17 (63 aa).

The protein belongs to the eukaryotic ribosomal protein eS17 family.

This is Small ribosomal subunit protein eS17 (rps17e) from Haloarcula marismortui (strain ATCC 43049 / DSM 3752 / JCM 8966 / VKM B-1809) (Halobacterium marismortui).